A 396-amino-acid polypeptide reads, in one-letter code: Flap endonuclease 1 (396 aa).

The interval 1 to 105 is N-domain; it reads MGIHGLTKLL…DQLAQRTERR (105 aa). Asp34 contacts Mg(2+). A DNA-binding site is contributed by Arg71. Residues Asp87, Glu159, Glu161, Asp180, and Asp182 each coordinate Mg(2+). The segment at 123–254 is I-domain; the sequence is AIEKYSKRSV…VRALQMIKKH (132 aa). Glu159 is a DNA binding site. Residues Gly232 and Asp234 each coordinate DNA. Asp234 contacts Mg(2+). The interaction with PCNA stretch occupies residues 338-346; that stretch reads NQGRLESFF. The tract at residues 341 to 396 is disordered; the sequence is RLESFFTSLPKPATADKAKPKEDDKKRKAGAAAGGKDAKGGAAAKKGKFGVGGGKK. Basic and acidic residues predominate over residues 354 to 366; sequence TADKAKPKEDDKK. Residues 370-384 are compositionally biased toward low complexity; sequence GAAAGGKDAKGGAAA.

This sequence belongs to the XPG/RAD2 endonuclease family. FEN1 subfamily. As to quaternary structure, interacts with PCNA. Three molecules of FEN1 bind to one PCNA trimer with each molecule binding to one PCNA monomer. PCNA stimulates the nuclease activity without altering cleavage specificity. It depends on Mg(2+) as a cofactor. Post-translationally, phosphorylated. Phosphorylation upon DNA damage induces relocalization to the nuclear plasma.

The protein resides in the nucleus. It localises to the nucleolus. Its subcellular location is the nucleoplasm. The protein localises to the mitochondrion. Structure-specific nuclease with 5'-flap endonuclease and 5'-3' exonuclease activities involved in DNA replication and repair. During DNA replication, cleaves the 5'-overhanging flap structure that is generated by displacement synthesis when DNA polymerase encounters the 5'-end of a downstream Okazaki fragment. It enters the flap from the 5'-end and then tracks to cleave the flap base, leaving a nick for ligation. Also involved in the long patch base excision repair (LP-BER) pathway, by cleaving within the apurinic/apyrimidinic (AP) site-terminated flap. Acts as a genome stabilization factor that prevents flaps from equilibrating into structures that lead to duplications and deletions. Also possesses 5'-3' exonuclease activity on nicked or gapped double-stranded DNA, and exhibits RNase H activity. Also involved in replication and repair of rDNA and in repairing mitochondrial DNA. The chain is Flap endonuclease 1 from Chlamydomonas reinhardtii (Chlamydomonas smithii).